An 82-amino-acid polypeptide reads, in one-letter code: uncharacterized protein (82 aa).

The next 3 membrane-spanning stretches (helical) occupy residues 4-26 (LDIA…TCIC), 31-48 (LMPM…FTIF), and 52-74 (FLGW…LIVV).

It is found in the cell membrane. This is an uncharacterized protein from Bacillus subtilis (strain 168).